The primary structure comprises 636 residues: Biosynthetic arginine decarboxylase (636 aa).

Residue lysine 101 is modified to N6-(pyridoxal phosphate)lysine. 286–296 (FDVGGGLAVDY) provides a ligand contact to substrate.

This sequence belongs to the Orn/Lys/Arg decarboxylase class-II family. SpeA subfamily. The cofactor is Mg(2+). Pyridoxal 5'-phosphate is required as a cofactor.

The catalysed reaction is L-arginine + H(+) = agmatine + CO2. Its pathway is amine and polyamine biosynthesis; agmatine biosynthesis; agmatine from L-arginine: step 1/1. Functionally, catalyzes the biosynthesis of agmatine from arginine. This Shewanella amazonensis (strain ATCC BAA-1098 / SB2B) protein is Biosynthetic arginine decarboxylase.